We begin with the raw amino-acid sequence, 420 residues long: Serine hydroxymethyltransferase (420 aa).

(6S)-5,6,7,8-tetrahydrofolate contacts are provided by residues leucine 121 and 125 to 127 (GHL). N6-(pyridoxal phosphate)lysine is present on lysine 230. (6S)-5,6,7,8-tetrahydrofolate contacts are provided by residues glutamate 246 and 354 to 356 (SPF).

It belongs to the SHMT family. As to quaternary structure, homodimer. Pyridoxal 5'-phosphate is required as a cofactor.

Its subcellular location is the cytoplasm. It catalyses the reaction (6R)-5,10-methylene-5,6,7,8-tetrahydrofolate + glycine + H2O = (6S)-5,6,7,8-tetrahydrofolate + L-serine. It participates in one-carbon metabolism; tetrahydrofolate interconversion. The protein operates within amino-acid biosynthesis; glycine biosynthesis; glycine from L-serine: step 1/1. Its function is as follows. Catalyzes the reversible interconversion of serine and glycine with tetrahydrofolate (THF) serving as the one-carbon carrier. This reaction serves as the major source of one-carbon groups required for the biosynthesis of purines, thymidylate, methionine, and other important biomolecules. Also exhibits THF-independent aldolase activity toward beta-hydroxyamino acids, producing glycine and aldehydes, via a retro-aldol mechanism. In Rickettsia akari (strain Hartford), this protein is Serine hydroxymethyltransferase.